We begin with the raw amino-acid sequence, 308 residues long: Vacuolar lysine transporter YPQ1 (308 aa).

Over 1–12 (MQLVPLELNRST) the chain is Vacuolar. A glycan (N-linked (GlcNAc...) asparagine) is linked at asparagine 9. A PQ-loop 1 domain is found at 10-76 (RSTLSGISGS…QHLLSTMIIL (67 aa)). A helical membrane pass occupies residues 13-33 (LSGISGSISISCWIIVFVPQI). At 34 to 44 (YENFYRKSSDG) the chain is on the cytoplasmic side. Residues 45–65 (LSLLFVVLWLAGDVFNLMGAV) form a helical membrane-spanning segment. Residues 66–68 (MQH) lie on the Vacuolar side of the membrane. A helical transmembrane segment spans residues 69 to 89 (LLSTMIILAAYYTVADIILLG). Residues 90-167 (QCLWYDNEEK…EVNSRNLIKD (78 aa)) are Cytoplasmic-facing. The helical transmembrane segment at 168–188 (IFIVSGVVFVGFISWYVTYCV) threads the bilayer. Asparagine 189 carries an N-linked (GlcNAc...) asparagine glycan. Residues 189 to 205 (NYTQPPPVEDPSLPVPE) are Vacuolar-facing. A helical transmembrane segment spans residues 206–226 (LQINWMAQIFGYLSALLYLGS). The PQ-loop 2 domain maps to 211 to 274 (MAQIFGYLSA…ISLDWKYLIM (64 aa)). The Cytoplasmic segment spans residues 227–244 (RIPQILLNFKRKSCEGIS). The chain crosses the membrane as a helical span at residues 245–265 (FLFFLFACLGNTTFIFSVIVI). Residues 266 to 277 (SLDWKYLIMNAS) lie on the Vacuolar side of the membrane. Asparagine 275 carries an N-linked (GlcNAc...) asparagine glycan. A helical membrane pass occupies residues 278-298 (WLVGSIGTLFMDFVIFSQFFI). Residues 299 to 308 (YKRNKKFILN) are Cytoplasmic-facing.

Belongs to the laat-1 family.

The protein localises to the vacuole membrane. Amino acid transporter that moves lysine into the vacuole. May also contribute to low affinity arginine import into the vacuole. Has also been suggested to mediate export of cationic amino acids from the vacuole. May function as an amino acid/proton antiporter. In Saccharomyces cerevisiae (strain ATCC 204508 / S288c) (Baker's yeast), this protein is Vacuolar lysine transporter YPQ1 (YPQ1).